Consider the following 338-residue polypeptide: Glycerol-3-phosphate dehydrogenase [NAD(P)+] (338 aa).

NADPH contacts are provided by Ser12, Trp13, Arg33, and Lys110. Positions 110, 141, and 143 each coordinate sn-glycerol 3-phosphate. Residue Ala145 coordinates NADPH. 5 residues coordinate sn-glycerol 3-phosphate: Lys196, Asp249, Ser259, Arg260, and Asn261. Catalysis depends on Lys196, which acts as the Proton acceptor. Residue Arg260 participates in NADPH binding. NADPH-binding residues include Val284 and Glu286.

This sequence belongs to the NAD-dependent glycerol-3-phosphate dehydrogenase family.

It localises to the cytoplasm. The catalysed reaction is sn-glycerol 3-phosphate + NAD(+) = dihydroxyacetone phosphate + NADH + H(+). It carries out the reaction sn-glycerol 3-phosphate + NADP(+) = dihydroxyacetone phosphate + NADPH + H(+). Its pathway is membrane lipid metabolism; glycerophospholipid metabolism. In terms of biological role, catalyzes the reduction of the glycolytic intermediate dihydroxyacetone phosphate (DHAP) to sn-glycerol 3-phosphate (G3P), the key precursor for phospholipid synthesis. This is Glycerol-3-phosphate dehydrogenase [NAD(P)+] from Limosilactobacillus reuteri (strain DSM 20016) (Lactobacillus reuteri).